The following is a 315-amino-acid chain: tRNA-dihydrouridine(16) synthase (315 aa).

FMN contacts are provided by residues 7-9 (PME) and glutamine 68. The Proton donor role is filled by cysteine 98. FMN is bound by residues lysine 139, 199–201 (NGE), and 223–224 (GR).

Belongs to the Dus family. DusC subfamily. FMN serves as cofactor.

The enzyme catalyses 5,6-dihydrouridine(16) in tRNA + NADP(+) = uridine(16) in tRNA + NADPH + H(+). It carries out the reaction 5,6-dihydrouridine(16) in tRNA + NAD(+) = uridine(16) in tRNA + NADH + H(+). In terms of biological role, catalyzes the synthesis of 5,6-dihydrouridine (D), a modified base found in the D-loop of most tRNAs, via the reduction of the C5-C6 double bond in target uridines. Specifically modifies U16 in tRNAs. In Shewanella oneidensis (strain ATCC 700550 / JCM 31522 / CIP 106686 / LMG 19005 / NCIMB 14063 / MR-1), this protein is tRNA-dihydrouridine(16) synthase.